A 535-amino-acid chain; its full sequence is Probable anion transporter 2, chloroplastic (535 aa).

The transit peptide at methionine 1–serine 95 directs the protein to the chloroplast. The next 12 helical transmembrane spans lie at valine 125–valine 145, phenylalanine 160–glycine 180, valine 191–serine 211, isoleucine 215–methionine 235, isoleucine 254–methionine 274, leucine 279–phenylalanine 299, isoleucine 343–leucine 363, alanine 381–alanine 401, valine 413–leucine 433, valine 443–phenylalanine 463, glycine 483–leucine 503, and glycine 504–tyrosine 524.

It belongs to the major facilitator superfamily. Sodium/anion cotransporter (TC 2.A.1.14) family.

Its subcellular location is the plastid. The protein resides in the chloroplast membrane. Its function is as follows. Probable anion transporter. This Oryza sativa subsp. japonica (Rice) protein is Probable anion transporter 2, chloroplastic (PHT4;2).